Reading from the N-terminus, the 81-residue chain is MAMSLEVFEKLEAKVQQAIDTITLLQMEIEELKEKNNSLAQDVQSAQHQREELERENNHLKEQQSGWQDRLQALLGRMEEV.

Residues glutamate 6–glutamate 80 are a coiled coil. Over residues serine 38–glutamine 47 the composition is skewed to polar residues. A disordered region spans residues serine 38–tryptophan 67. Residues histidine 48–glutamate 62 are compositionally biased toward basic and acidic residues.

It belongs to the ZapB family. In terms of assembly, homodimer. The ends of the coiled-coil dimer bind to each other, forming polymers. Interacts with FtsZ.

Its subcellular location is the cytoplasm. In terms of biological role, non-essential, abundant cell division factor that is required for proper Z-ring formation. It is recruited early to the divisome by direct interaction with FtsZ, stimulating Z-ring assembly and thereby promoting cell division earlier in the cell cycle. Its recruitment to the Z-ring requires functional FtsA or ZipA. The sequence is that of Cell division protein ZapB from Citrobacter koseri (strain ATCC BAA-895 / CDC 4225-83 / SGSC4696).